A 243-amino-acid chain; its full sequence is 3-deoxy-manno-octulosonate cytidylyltransferase (243 aa).

This sequence belongs to the KdsB family.

The protein resides in the cytoplasm. The enzyme catalyses 3-deoxy-alpha-D-manno-oct-2-ulosonate + CTP = CMP-3-deoxy-beta-D-manno-octulosonate + diphosphate. Its pathway is nucleotide-sugar biosynthesis; CMP-3-deoxy-D-manno-octulosonate biosynthesis; CMP-3-deoxy-D-manno-octulosonate from 3-deoxy-D-manno-octulosonate and CTP: step 1/1. The protein operates within bacterial outer membrane biogenesis; lipopolysaccharide biosynthesis. Functionally, activates KDO (a required 8-carbon sugar) for incorporation into bacterial lipopolysaccharide in Gram-negative bacteria. In Helicobacter acinonychis (strain Sheeba), this protein is 3-deoxy-manno-octulosonate cytidylyltransferase.